Consider the following 415-residue polypeptide: Gamma-glutamyl phosphate reductase (415 aa).

The protein belongs to the gamma-glutamyl phosphate reductase family.

The protein resides in the cytoplasm. It carries out the reaction L-glutamate 5-semialdehyde + phosphate + NADP(+) = L-glutamyl 5-phosphate + NADPH + H(+). Its pathway is amino-acid biosynthesis; L-proline biosynthesis; L-glutamate 5-semialdehyde from L-glutamate: step 2/2. Its function is as follows. Catalyzes the NADPH-dependent reduction of L-glutamate 5-phosphate into L-glutamate 5-semialdehyde and phosphate. The product spontaneously undergoes cyclization to form 1-pyrroline-5-carboxylate. The sequence is that of Gamma-glutamyl phosphate reductase from Cutibacterium acnes (strain DSM 16379 / KPA171202) (Propionibacterium acnes).